The chain runs to 132 residues: Myelin P2 protein (132 aa).

Position 2 is an N-acetylserine (Ser-2). Arg-107 contacts (9Z)-octadecenoate. Arg-107 is a hexadecanoate binding site. A disulfide bond links Cys-118 and Cys-125. 127–129 (RIY) lines the (9Z)-octadecenoate pocket. 127-129 (RIY) provides a ligand contact to hexadecanoate.

Belongs to the calycin superfamily. Fatty-acid binding protein (FABP) family. In terms of assembly, monomer. In terms of tissue distribution, detected in spinal cord (at protein level).

It localises to the cytoplasm. Its function is as follows. May play a role in lipid transport protein in Schwann cells. May bind cholesterol. In Equus caballus (Horse), this protein is Myelin P2 protein (PMP2).